Reading from the N-terminus, the 408-residue chain is Elongation factor Tu, chloroplastic (408 aa).

Residues 10–214 form the tr-type G domain; sequence KPHVNIGTIG…AVDSYIPTPK (205 aa). The G1 stretch occupies residues 19-26; the sequence is GHVDHGKT. 19-26 lines the GTP pocket; the sequence is GHVDHGKT. T26 provides a ligand contact to Mg(2+). The segment at 60 to 64 is G2; that stretch reads GITIN. Residues 81–84 form a G3 region; sequence DCPG. Residues 81–85 and 136–139 contribute to the GTP site; these read DCPGH and NKED. Residues 136-139 form a G4 region; it reads NKED. The G5 stretch occupies residues 174-176; that stretch reads SAL.

The protein belongs to the TRAFAC class translation factor GTPase superfamily. Classic translation factor GTPase family. EF-Tu/EF-1A subfamily.

Its subcellular location is the plastid. The protein localises to the chloroplast. The catalysed reaction is GTP + H2O = GDP + phosphate + H(+). In terms of biological role, GTP hydrolase that promotes the GTP-dependent binding of aminoacyl-tRNA to the A-site of ribosomes during protein biosynthesis. The protein is Elongation factor Tu, chloroplastic (tufA) of Chara connivens (Convergent stonewort).